A 254-amino-acid polypeptide reads, in one-letter code: 5-oxoprolinase subunit A (254 aa).

The protein belongs to the LamB/PxpA family. Forms a complex composed of PxpA, PxpB and PxpC.

The catalysed reaction is 5-oxo-L-proline + ATP + 2 H2O = L-glutamate + ADP + phosphate + H(+). Functionally, catalyzes the cleavage of 5-oxoproline to form L-glutamate coupled to the hydrolysis of ATP to ADP and inorganic phosphate. This is 5-oxoprolinase subunit A from Acinetobacter baylyi (strain ATCC 33305 / BD413 / ADP1).